A 257-amino-acid polypeptide reads, in one-letter code: Ribosomal RNA small subunit methyltransferase A (257 aa).

Positions 12, 14, 39, 60, 83, and 101 each coordinate S-adenosyl-L-methionine.

It belongs to the class I-like SAM-binding methyltransferase superfamily. rRNA adenine N(6)-methyltransferase family. RsmA subfamily.

Its subcellular location is the cytoplasm. It carries out the reaction adenosine(1518)/adenosine(1519) in 16S rRNA + 4 S-adenosyl-L-methionine = N(6)-dimethyladenosine(1518)/N(6)-dimethyladenosine(1519) in 16S rRNA + 4 S-adenosyl-L-homocysteine + 4 H(+). Its function is as follows. Specifically dimethylates two adjacent adenosines (A1518 and A1519) in the loop of a conserved hairpin near the 3'-end of 16S rRNA in the 30S particle. May play a critical role in biogenesis of 30S subunits. This is Ribosomal RNA small subunit methyltransferase A from Nitrosomonas europaea (strain ATCC 19718 / CIP 103999 / KCTC 2705 / NBRC 14298).